Consider the following 140-residue polypeptide: Sex-regulated protein janus-B (140 aa).

Substrate is bound at residue arginine 42. Catalysis depends on histidine 69, which acts as the Proton acceptor. Residue 110–112 coordinates substrate; that stretch reads SRT.

The protein belongs to the janus family.

Functionally, janA and janB regulate somatic sex differentiation. This chain is Sex-regulated protein janus-B (janB), found in Drosophila yakuba (Fruit fly).